A 255-amino-acid chain; its full sequence is 5-oxoprolinase subunit A (255 aa).

The protein belongs to the LamB/PxpA family. In terms of assembly, forms a complex composed of PxpA, PxpB and PxpC.

The enzyme catalyses 5-oxo-L-proline + ATP + 2 H2O = L-glutamate + ADP + phosphate + H(+). Its function is as follows. Catalyzes the cleavage of 5-oxoproline to form L-glutamate coupled to the hydrolysis of ATP to ADP and inorganic phosphate. This chain is 5-oxoprolinase subunit A, found in Clostridium kluyveri (strain ATCC 8527 / DSM 555 / NBRC 12016 / NCIMB 10680 / K1).